The following is an 896-amino-acid chain: Alanine--tRNA ligase (896 aa).

Zn(2+) contacts are provided by histidine 581, histidine 585, cysteine 684, and histidine 688.

Belongs to the class-II aminoacyl-tRNA synthetase family. Zn(2+) serves as cofactor.

The protein localises to the cytoplasm. It carries out the reaction tRNA(Ala) + L-alanine + ATP = L-alanyl-tRNA(Ala) + AMP + diphosphate. In terms of biological role, catalyzes the attachment of alanine to tRNA(Ala) in a two-step reaction: alanine is first activated by ATP to form Ala-AMP and then transferred to the acceptor end of tRNA(Ala). Also edits incorrectly charged Ser-tRNA(Ala) and Gly-tRNA(Ala) via its editing domain. The chain is Alanine--tRNA ligase from Renibacterium salmoninarum (strain ATCC 33209 / DSM 20767 / JCM 11484 / NBRC 15589 / NCIMB 2235).